Reading from the N-terminus, the 319-residue chain is Protoheme IX farnesyltransferase (319 aa).

Helical transmembrane passes span 59–79, 108–128, 131–151, 158–178, 183–203, 232–252, 254–274, and 299–319; these read IGLILATLVGGAFAAGSAGAF, EALVFSWLLGAAAIAILWFGA, LSAWLGLGAIFFYVVIYTIIL, NIVWGGAAGCFPVLIAWAAVT, WPAIILFMVIFLWTPPHYWPL, VVLYAWAMVACSLLMVPAGGA, WVYTVTAVLAGAWFLYESHAL, and LTLLFIALAVDPFVGPAVIGG.

This sequence belongs to the UbiA prenyltransferase family. Protoheme IX farnesyltransferase subfamily.

It localises to the cell membrane. It carries out the reaction heme b + (2E,6E)-farnesyl diphosphate + H2O = Fe(II)-heme o + diphosphate. It functions in the pathway porphyrin-containing compound metabolism; heme O biosynthesis; heme O from protoheme: step 1/1. Its function is as follows. Converts heme B (protoheme IX) to heme O by substitution of the vinyl group on carbon 2 of heme B porphyrin ring with a hydroxyethyl farnesyl side group. The polypeptide is Protoheme IX farnesyltransferase (Pseudarthrobacter chlorophenolicus (strain ATCC 700700 / DSM 12829 / CIP 107037 / JCM 12360 / KCTC 9906 / NCIMB 13794 / A6) (Arthrobacter chlorophenolicus)).